We begin with the raw amino-acid sequence, 320 residues long: Stress-involved WYL domain-containing regulator (320 aa).

An HTH deoR-type domain is found at 7-65 (TTGRVVQLLGLLQSRRVWTGEELAERLGVTGRSVRRDIERLRELGYPVHASKGQGGGYQ). The segment at residues 24 to 43 (WTGEELAERLGVTGRSVRRD) is a DNA-binding region (H-T-H motif). A WYL domain is found at 139 to 218 (DTAVAPDVLM…SDVRATGTTF (80 aa)). Residues 245–320 (VRYFAPEKVV…MADRLRRAVR (76 aa)) are WCX domain.

As to quaternary structure, homodimer.

In terms of biological role, transcriptional activator. Acts as a transcriptional activator of the MSMEG_1357-56 operon upon genotoxic stress. Controls adjacent genes that belong to the DinB/YfiT-like putative metalloenzymes superfamily by upregulating their expression in response to various genotoxic stress conditions, including exposure to H(2)O(2) or the natural antibiotic zeocin, as well as mitomycin C (MMC), diamide and UVC radiation. Upon genotoxic stress, upregulates two genes encoding proteins of the DinB/YfiT-like putative metalloenzymes superfamily, MSMEG_1357 and MSMEG_1356. Binds different forms of single-stranded DNA (ssDNA) with high affinity, primarily through its characteristic WYL domain. Binds nucleic acids with single-stranded regions, such as polyT 20mer ssDNA, 5' tailed, 3' tailed and fork DNA, but not ssRNA. The protein is Stress-involved WYL domain-containing regulator of Mycolicibacterium smegmatis (strain ATCC 700084 / mc(2)155) (Mycobacterium smegmatis).